The following is a 145-amino-acid chain: Large ribosomal subunit protein uL16 (145 aa).

It belongs to the universal ribosomal protein uL16 family. As to quaternary structure, part of the 50S ribosomal subunit.

Its function is as follows. Binds 23S rRNA and is also seen to make contacts with the A and possibly P site tRNAs. The chain is Large ribosomal subunit protein uL16 from Shouchella clausii (strain KSM-K16) (Alkalihalobacillus clausii).